The following is a 253-amino-acid chain: uncharacterized protein (253 aa).

Polar residues predominate over residues 175–184 (NPTQTSPGKP). Residues 175–253 (NPTQTSPGKP…ATENEDRLPS (79 aa)) are disordered. Ser-180 bears the Phosphoserine mark. Composition is skewed to low complexity over residues 185–196 (STSESSQTDTST) and 203–214 (TPTTTRASSYTT). The span at 215–242 (LVSTSNQVSNEAEASAVETSANQAQNTE) shows a compositional bias: polar residues.

The protein belongs to the TRAPP small subunits family. BET3 subfamily.

This is an uncharacterized protein from Schizosaccharomyces pombe (strain 972 / ATCC 24843) (Fission yeast).